The following is a 719-amino-acid chain: DNA ligase (719 aa).

NAD(+) is bound by residues D42–D46, S92–L93, and E126. K128 (N6-AMP-lysine intermediate) is an active-site residue. 4 residues coordinate NAD(+): R149, E185, K301, and K325. Zn(2+) is bound by residues C430, C433, C448, and C454. A BRCT domain is found at A640–D719.

This sequence belongs to the NAD-dependent DNA ligase family. LigA subfamily. Mg(2+) serves as cofactor. Mn(2+) is required as a cofactor.

The enzyme catalyses NAD(+) + (deoxyribonucleotide)n-3'-hydroxyl + 5'-phospho-(deoxyribonucleotide)m = (deoxyribonucleotide)n+m + AMP + beta-nicotinamide D-nucleotide.. In terms of biological role, DNA ligase that catalyzes the formation of phosphodiester linkages between 5'-phosphoryl and 3'-hydroxyl groups in double-stranded DNA using NAD as a coenzyme and as the energy source for the reaction. It is essential for DNA replication and repair of damaged DNA. The chain is DNA ligase from Brucella melitensis biotype 2 (strain ATCC 23457).